Reading from the N-terminus, the 367-residue chain is tRNA-specific 2-thiouridylase MnmA (367 aa).

Residues 7-14 (AMSGGVDS) and methionine 33 contribute to the ATP site. Residue cysteine 108 is the Nucleophile of the active site. Cysteine 108 and cysteine 200 are disulfide-bonded. Glycine 132 is an ATP binding site. Residues 150–152 (KDQ) are interaction with tRNA. Cysteine 200 functions as the Cysteine persulfide intermediate in the catalytic mechanism. An interaction with tRNA region spans residues 301–302 (RY).

The protein belongs to the MnmA/TRMU family.

Its subcellular location is the cytoplasm. The enzyme catalyses S-sulfanyl-L-cysteinyl-[protein] + uridine(34) in tRNA + AH2 + ATP = 2-thiouridine(34) in tRNA + L-cysteinyl-[protein] + A + AMP + diphosphate + H(+). In terms of biological role, catalyzes the 2-thiolation of uridine at the wobble position (U34) of tRNA, leading to the formation of s(2)U34. This chain is tRNA-specific 2-thiouridylase MnmA, found in Thermus thermophilus (strain ATCC BAA-163 / DSM 7039 / HB27).